The following is a 563-amino-acid chain: Proton channel OTOP2 (563 aa).

Residues 1-20 (MSEELVPHPNESLPGPRASP) form a disordered region. Transmembrane regions (helical) follow at residues 30–50 (LLSVLLAVNVLLLACTLISGG), 62–82 (VFALLTTMMLLAALWIVFYLL), 100–120 (PIWLRGGLVLFGICTLVMDVF), 137–157 (ILHPIIQAVFVIVQTYFLWIS), 173–193 (LMFTLATNLAIWMAAVVDESV), 242–262 (FYLYPFNIEYSLFASTMLYVM), 290–310 (FFAGPVLGLLLFVVGLAVFIL), 325–345 (ALVIYYSFNIVCLGLMTLVSL), 373–393 (LMGAALGQYAISYYSIVAVVV), 403–423 (LNLSHALLMIAQHTFQNVFII), 496–516 (DISLFLLLCNVILWIMPAFGA), and 528–548 (FYGYSLWAAIVNICLPFGIFY).

It belongs to the otopetrin family. In terms of tissue distribution, expressed at higher level in stomach, testis and olfactory bulb.

It localises to the cell membrane. It carries out the reaction H(+)(in) = H(+)(out). With respect to regulation, actives at neutral and alkaline extracellular pH, acid extracellular pH appears to inhibit the channel. Insensitive to activation by Zn(2+). In terms of biological role, proton-selective ion channel open at neutral pH. Actives at neutral and alkaline extracellular pH, likely participates in some alkali-related physiological activities. The protein is Proton channel OTOP2 of Mus musculus (Mouse).